A 603-amino-acid chain; its full sequence is Protein SHORT-ROOT 2 (603 aa).

Disordered regions lie at residues 11 to 58 (HHHH…HSHS) and 106 to 140 (DFSS…SSAG). The span at 31 to 44 (SYPSSRGSTSSPSS) shows a compositional bias: low complexity. Residues 45–58 (HHTHNHTYYHHSHS) are compositionally biased toward basic residues. The span at 108–125 (SSSSSSRQFHSGTGAPSS) shows a compositional bias: low complexity. Residues 179 to 602 (AAPSSSGRWA…QPVVWASAWK (424 aa)) enclose the GRAS domain. Positions 186-249 (RWAAQLLMEC…LTTSGPRTLR (64 aa)) are leucine repeat I (LRI). The segment at 268–354 (ALKFQELSPW…DTPHLSITTV (87 aa)) is VHIID. A VHIID motif is present at residues 318–322 (LHILD). The interval 370–406 (EIGQRLEKFARLMGVPFSFRAVHHAGDLADLDLAALD) is leucine repeat II (LRII). The interval 416–514 (LAVNCVNALR…ERAVGRAIVD (99 aa)) is PFYRE. An SAW region spans residues 517–602 (SCPASQSAER…QPVVWASAWK (86 aa)).

The protein belongs to the GRAS family. In terms of assembly, does not interact with SCR1.

Its subcellular location is the nucleus. Its function is as follows. Putative transcription factor involved in asymmetric cell division. The polypeptide is Protein SHORT-ROOT 2 (SHR2) (Oryza sativa subsp. indica (Rice)).